We begin with the raw amino-acid sequence, 686 residues long: Protein arginine N-methyltransferase 7 (686 aa).

SAM-dependent MTase PRMT-type domains lie at 5–352 and 357–686; these read SDDY…FSWW and DLSL…FKFD.

Belongs to the class I-like SAM-binding methyltransferase superfamily. Protein arginine N-methyltransferase family. PRMT7 subfamily.

Essential arginine methyltransferase that can both catalyze the formation of omega-N monomethylarginine (MMA) and symmetrical dimethylarginine (sDMA). Specifically mediates the symmetrical dimethylation of arginine residues in the small nuclear ribonucleoproteins SmD1 and SmD3. The chain is Protein arginine N-methyltransferase 7 (Art7) from Aedes aegypti (Yellowfever mosquito).